Here is a 950-residue protein sequence, read N- to C-terminus: MORC family CW-type zinc finger protein 1 (950 aa).

Positions 281–342 (KGKFKTEVQK…TKHKSLRQKQ (62 aa)) form a coiled coil. The CW-type zinc-finger motif lies at 465 to 530 (SLESLQWRRR…SCNQIERLPS (66 aa)). Zn(2+) is bound by residues Cys-485, Cys-488, Cys-511, and Cys-522. Disordered regions lie at residues 532 to 551 (PLGTVNRRPPSKDERERQLQ) and 679 to 700 (KKQQSESLVQAGKASTDVASSR). The segment covering 541-550 (PSKDERERQL) has biased composition (basic and acidic residues). Residues 885–916 (LGQCELKRKRTEEKLSDLRAKLALLLQKLQLG) adopt a coiled-coil conformation.

As to expression, expressed at very low level in male germ cells.

It localises to the nucleus. Functionally, required for spermatogenesis. Essential for de novo DNA methylation and silencing of transposable elements in the male embryonic germ cells. Not required for piRNA biosynthesis. This chain is MORC family CW-type zinc finger protein 1, found in Mus musculus (Mouse).